Consider the following 659-residue polypeptide: Zeaxanthin epoxidase, chloroplastic (659 aa).

The transit peptide at M1 to A50 directs the protein to the chloroplast. FAD-binding positions include R79 to E107 and T357 to D370. One can recognise an FHA domain in the interval L553–G607.

FAD is required as a cofactor. Expressed in young microspores.

The protein localises to the plastid. It is found in the chloroplast membrane. It localises to the chloroplast thylakoid membrane. The catalysed reaction is all-trans-zeaxanthin + 4 reduced [2Fe-2S]-[ferredoxin] + 2 O2 + 4 H(+) = all-trans-violaxanthin + 4 oxidized [2Fe-2S]-[ferredoxin] + 2 H2O. Its pathway is plant hormone biosynthesis; abscisate biosynthesis. In terms of biological role, zeaxanthin epoxidase that plays an important role in the xanthophyll cycle and abscisic acid (ABA) biosynthesis. Converts zeaxanthin into antheraxanthin and subsequently violaxanthin. Required for resistance to osmotic and drought stresses, seed development and dormancy. This is Zeaxanthin epoxidase, chloroplastic (ZEP) from Oryza sativa subsp. japonica (Rice).